A 984-amino-acid polypeptide reads, in one-letter code: Probable beta-galactosidase C (984 aa).

An N-terminal signal peptide occupies residues Met1–Ala23. Substrate is bound by residues Tyr82, Asn127, Ala128, Glu129, and Asn187. Glu188 functions as the Proton donor in the catalytic mechanism. N-linked (GlcNAc...) asparagine glycosylation is present at Asn197. Tyr251 provides a ligand contact to substrate. Cysteines 257 and 304 form a disulfide. Asn276 carries N-linked (GlcNAc...) asparagine glycosylation. The active-site Nucleophile is the Glu287. Tyr353 is a binding site for substrate. N-linked (GlcNAc...) asparagine glycosylation is found at Asn391, Asn421, Asn434, Asn517, Asn602, Asn677, Asn715, Asn720, Asn759, and Asn805.

It belongs to the glycosyl hydrolase 35 family.

It localises to the secreted. It catalyses the reaction Hydrolysis of terminal non-reducing beta-D-galactose residues in beta-D-galactosides.. In terms of biological role, cleaves beta-linked terminal galactosyl residues from gangliosides, glycoproteins, and glycosaminoglycans. The chain is Probable beta-galactosidase C (lacC) from Aspergillus flavus (strain ATCC 200026 / FGSC A1120 / IAM 13836 / NRRL 3357 / JCM 12722 / SRRC 167).